Here is a 529-residue protein sequence, read N- to C-terminus: NAD(P)H-quinone oxidoreductase chain 4 1 (529 aa).

Transmembrane regions (helical) follow at residues 4–24 (FPWL…IPFI), 36–56 (WYAL…FTNF), 91–111 (LILL…PVTL), 115–135 (LFYF…AVQD), 137–157 (LVFF…LAIW), 169–189 (FILY…AMAF), 209–229 (GFQL…LPIV), 243–263 (TAPV…YALI), 277–297 (FAPV…LTSY), 314–334 (IGFV…GAVL), 335–355 (QMVS…ATYD), 387–407 (LALP…GFAT), and 417–437 (VIVV…LLSM).

It belongs to the complex I subunit 4 family.

Its subcellular location is the cellular thylakoid membrane. It catalyses the reaction a plastoquinone + NADH + (n+1) H(+)(in) = a plastoquinol + NAD(+) + n H(+)(out). It carries out the reaction a plastoquinone + NADPH + (n+1) H(+)(in) = a plastoquinol + NADP(+) + n H(+)(out). NDH-1 shuttles electrons from NAD(P)H, via FMN and iron-sulfur (Fe-S) centers, to quinones in the respiratory chain. The immediate electron acceptor for the enzyme in this species is believed to be plastoquinone. Couples the redox reaction to proton translocation (for every two electrons transferred, four hydrogen ions are translocated across the cytoplasmic membrane), and thus conserves the redox energy in a proton gradient. The polypeptide is NAD(P)H-quinone oxidoreductase chain 4 1 (Thermosynechococcus vestitus (strain NIES-2133 / IAM M-273 / BP-1)).